We begin with the raw amino-acid sequence, 446 residues long: Exodeoxyribonuclease 7 large subunit (446 aa).

This sequence belongs to the XseA family. Heterooligomer composed of large and small subunits.

The protein localises to the cytoplasm. The catalysed reaction is Exonucleolytic cleavage in either 5'- to 3'- or 3'- to 5'-direction to yield nucleoside 5'-phosphates.. Its function is as follows. Bidirectionally degrades single-stranded DNA into large acid-insoluble oligonucleotides, which are then degraded further into small acid-soluble oligonucleotides. This chain is Exodeoxyribonuclease 7 large subunit, found in Streptococcus thermophilus (strain CNRZ 1066).